The primary structure comprises 51 residues: Suberization-associated anionic peroxidase 1 (51 aa).

Heme is bound at residue His30. Thr31 lines the Ca(2+) pocket.

Belongs to the peroxidase family. Classical plant (class III) peroxidase subfamily. It depends on heme b as a cofactor. Ca(2+) is required as a cofactor.

Its subcellular location is the secreted. It carries out the reaction 2 a phenolic donor + H2O2 = 2 a phenolic radical donor + 2 H2O. In terms of biological role, removal of H(2)O(2), oxidation of toxic reductants, biosynthesis and degradation of lignin, suberization, auxin catabolism, response to environmental stresses such as wounding, pathogen attack and oxidative stress. These functions might be dependent on each isozyme/isoform in each plant tissue. Functionally, suggested to catalyze the deposition of the aromatic residues of suberin on the cell wall and thus play a role in cell-suberization. The protein is Suberization-associated anionic peroxidase 1 of Capsicum annuum (Capsicum pepper).